The sequence spans 177 residues: Acetyltransferase (177 aa).

Residues 4 to 174 (AQLRRVTAES…PTAIYFKTLG (171 aa)) enclose the N-acetyltransferase domain. Acetyl-CoA is bound by residues glutamate 27, 96–98 (LMV), 104–109 (GRGLGR), 130–131 (DT), and tyrosine 141.

Renders tabtoxin-producing pathogens tolerant to their own phytotoxins. This is Acetyltransferase (ttr) from Pseudomonas amygdali pv. tabaci (Pseudomonas syringae pv. tabaci).